The primary structure comprises 159 residues: Phosphopantetheine adenylyltransferase (159 aa).

His-16 is a binding site for ATP. Lys-40, Met-72, and Arg-86 together coordinate substrate. ATP is bound by residues 87–89 (GLR), Glu-97, and 122–128 (YQYLSAS).

Belongs to the bacterial CoaD family. Homohexamer. It depends on Mg(2+) as a cofactor.

The protein resides in the cytoplasm. It catalyses the reaction (R)-4'-phosphopantetheine + ATP + H(+) = 3'-dephospho-CoA + diphosphate. It functions in the pathway cofactor biosynthesis; coenzyme A biosynthesis; CoA from (R)-pantothenate: step 4/5. In terms of biological role, reversibly transfers an adenylyl group from ATP to 4'-phosphopantetheine, yielding dephospho-CoA (dPCoA) and pyrophosphate. This Dehalococcoides mccartyi (strain ATCC BAA-2100 / JCM 16839 / KCTC 5957 / BAV1) protein is Phosphopantetheine adenylyltransferase.